Consider the following 267-residue polypeptide: Undecaprenyl-diphosphatase (267 aa).

The next 8 helical transmembrane spans lie at 5–25 (TIVA…PVSS), 45–65 (FEVL…AGRL), 82–102 (ILAV…AHRI), 108–128 (FETP…LLFV), 143–163 (FPLP…IPGV), 183–203 (AAEF…VYDL), 213–233 (AATG…VVVV), and 243–263 (YGYG…LLAL).

It belongs to the UppP family.

The protein resides in the cell inner membrane. It catalyses the reaction di-trans,octa-cis-undecaprenyl diphosphate + H2O = di-trans,octa-cis-undecaprenyl phosphate + phosphate + H(+). Functionally, catalyzes the dephosphorylation of undecaprenyl diphosphate (UPP). Confers resistance to bacitracin. This is Undecaprenyl-diphosphatase from Paracoccus denitrificans (strain Pd 1222).